The following is a 184-amino-acid chain: Elongation factor P (184 aa).

The protein belongs to the elongation factor P family.

The protein resides in the cytoplasm. It participates in protein biosynthesis; polypeptide chain elongation. In terms of biological role, involved in peptide bond synthesis. Stimulates efficient translation and peptide-bond synthesis on native or reconstituted 70S ribosomes in vitro. Probably functions indirectly by altering the affinity of the ribosome for aminoacyl-tRNA, thus increasing their reactivity as acceptors for peptidyl transferase. The sequence is that of Elongation factor P from Polaromonas sp. (strain JS666 / ATCC BAA-500).